The chain runs to 418 residues: Nucleoside permease NupC (418 aa).

9 helical membrane-spanning segments follow: residues 2-22 (IFSS…AWVF), 34-54 (IVSA…VPLG), 93-113 (IGGF…ASLI), 174-194 (IFAV…AGYA), 198-218 (IPLP…LLFA), 264-284 (LLAF…VGGF), 292-314 (LGLI…WSQA), 354-374 (AIIT…MLIG), and 395-415 (VLVG…FIGL).

The protein belongs to the concentrative nucleoside transporter (CNT) (TC 2.A.41) family.

It is found in the cell inner membrane. In terms of biological role, involved in purine nucleosides uptake. Could also be involved in uptake of nucleobases. The chain is Nucleoside permease NupC from Helicobacter pylori (strain ATCC 700392 / 26695) (Campylobacter pylori).